Here is a 332-residue protein sequence, read N- to C-terminus: Beta-ketoacyl-[acyl-carrier-protein] synthase III 5 (332 aa).

Catalysis depends on residues cysteine 111 and histidine 253. Positions 254–258 are ACP-binding; sequence QANAR. Residue asparagine 283 is part of the active site.

This sequence belongs to the thiolase-like superfamily. FabH family. Homodimer.

The protein localises to the cytoplasm. It carries out the reaction malonyl-[ACP] + acetyl-CoA + H(+) = 3-oxobutanoyl-[ACP] + CO2 + CoA. It participates in lipid metabolism; fatty acid biosynthesis. In terms of biological role, catalyzes the condensation reaction of fatty acid synthesis by the addition to an acyl acceptor of two carbons from malonyl-ACP. Catalyzes the first condensation reaction which initiates fatty acid synthesis and may therefore play a role in governing the total rate of fatty acid production. Possesses both acetoacetyl-ACP synthase and acetyl transacylase activities. Its substrate specificity determines the biosynthesis of branched-chain and/or straight-chain of fatty acids. The protein is Beta-ketoacyl-[acyl-carrier-protein] synthase III 5 of Streptomyces coelicolor (strain ATCC BAA-471 / A3(2) / M145).